Reading from the N-terminus, the 351-residue chain is Protein Wnt-4 (351 aa).

A signal peptide spans 1–22 (MTPEYFLRSLLMMILAVFSANA). Disulfide bonds link cysteine 78/cysteine 89, cysteine 128/cysteine 136, cysteine 138/cysteine 155, cysteine 206/cysteine 220, cysteine 208/cysteine 215, cysteine 280/cysteine 311, cysteine 296/cysteine 306, cysteine 310/cysteine 350, cysteine 326/cysteine 341, cysteine 328/cysteine 338, and cysteine 333/cysteine 334. A glycan (N-linked (GlcNAc...) asparagine) is linked at asparagine 88. Serine 212 carries O-palmitoleoyl serine; by PORCN lipidation. Asparagine 297 carries an N-linked (GlcNAc...) asparagine glycan.

The protein belongs to the Wnt family. Palmitoleoylation is required for efficient binding to frizzled receptors. Depalmitoleoylation leads to Wnt signaling pathway inhibition. As to expression, expressed in the brain and floor plate. In the developing pronephros, expressed in the proximal tubules and nephrostomes but absent from the pronephric duct.

It is found in the secreted. The protein localises to the extracellular space. The protein resides in the extracellular matrix. Ligand for members of the frizzled family of seven transmembrane receptors. Plays an important role in embryonic kidney development. Acts downstream of Notch signaling during pronephric kidney development. During early pronephros development, patterns the proximal pronephric anlagen to promote glomus and nephrostome formation. Also required later in pronephros development for tubulogenesis. The polypeptide is Protein Wnt-4 (wnt4) (Xenopus laevis (African clawed frog)).